We begin with the raw amino-acid sequence, 441 residues long: Proline--tRNA ligase (441 aa).

This sequence belongs to the class-II aminoacyl-tRNA synthetase family. ProS type 2 subfamily. In terms of assembly, homodimer.

Its subcellular location is the cytoplasm. It catalyses the reaction tRNA(Pro) + L-proline + ATP = L-prolyl-tRNA(Pro) + AMP + diphosphate. Catalyzes the attachment of proline to tRNA(Pro) in a two-step reaction: proline is first activated by ATP to form Pro-AMP and then transferred to the acceptor end of tRNA(Pro). The polypeptide is Proline--tRNA ligase (Methylorubrum extorquens (strain PA1) (Methylobacterium extorquens)).